Consider the following 273-residue polypeptide: 4-hydroxy-tetrahydrodipicolinate reductase (273 aa).

NAD(+)-binding positions include 12–17 (GAGGRM) and E38. R39 contacts NADP(+). NAD(+) is bound by residues 102-104 (GTT) and 126-129 (AANF). H159 acts as the Proton donor/acceptor in catalysis. Residue H160 coordinates (S)-2,3,4,5-tetrahydrodipicolinate. K163 acts as the Proton donor in catalysis. (S)-2,3,4,5-tetrahydrodipicolinate is bound at residue 169–170 (GT).

The protein belongs to the DapB family. Homotetramer.

Its subcellular location is the cytoplasm. The catalysed reaction is (S)-2,3,4,5-tetrahydrodipicolinate + NAD(+) + H2O = (2S,4S)-4-hydroxy-2,3,4,5-tetrahydrodipicolinate + NADH + H(+). The enzyme catalyses (S)-2,3,4,5-tetrahydrodipicolinate + NADP(+) + H2O = (2S,4S)-4-hydroxy-2,3,4,5-tetrahydrodipicolinate + NADPH + H(+). The protein operates within amino-acid biosynthesis; L-lysine biosynthesis via DAP pathway; (S)-tetrahydrodipicolinate from L-aspartate: step 4/4. In terms of biological role, catalyzes the conversion of 4-hydroxy-tetrahydrodipicolinate (HTPA) to tetrahydrodipicolinate. In Salmonella dublin (strain CT_02021853), this protein is 4-hydroxy-tetrahydrodipicolinate reductase.